A 508-amino-acid polypeptide reads, in one-letter code: UDP-N-acetylmuramoylalanine--D-glutamate ligase (508 aa).

Position 138 to 144 (138 to 144 (GTNGKTT)) interacts with ATP.

This sequence belongs to the MurCDEF family.

Its subcellular location is the cytoplasm. It catalyses the reaction UDP-N-acetyl-alpha-D-muramoyl-L-alanine + D-glutamate + ATP = UDP-N-acetyl-alpha-D-muramoyl-L-alanyl-D-glutamate + ADP + phosphate + H(+). The protein operates within cell wall biogenesis; peptidoglycan biosynthesis. Its function is as follows. Cell wall formation. Catalyzes the addition of glutamate to the nucleotide precursor UDP-N-acetylmuramoyl-L-alanine (UMA). This Bordetella avium (strain 197N) protein is UDP-N-acetylmuramoylalanine--D-glutamate ligase.